Consider the following 475-residue polypeptide: 1-aminocyclopropane-1-carboxylate synthase CMA101 (475 aa).

N6-(pyridoxal phosphate)lysine is present on Lys-272.

The protein belongs to the class-I pyridoxal-phosphate-dependent aminotransferase family. In terms of assembly, homodimer. Requires pyridoxal 5'-phosphate as cofactor.

The enzyme catalyses S-adenosyl-L-methionine = 1-aminocyclopropane-1-carboxylate + S-methyl-5'-thioadenosine + H(+). Its pathway is alkene biosynthesis; ethylene biosynthesis via S-adenosyl-L-methionine; ethylene from S-adenosyl-L-methionine: step 1/2. Functionally, catalyzes the formation of 1-aminocyclopropane-1-carboxylate, a direct precursor of ethylene in higher plants. The sequence is that of 1-aminocyclopropane-1-carboxylate synthase CMA101 (ACS2) from Cucurbita maxima (Pumpkin).